A 256-amino-acid chain; its full sequence is 4-hydroxy-tetrahydrodipicolinate reductase (256 aa).

Residue 8 to 13 participates in NAD(+) binding; sequence GASGKM. Lys36 is a binding site for NADP(+). Residues 87–89 and 111–114 each bind NAD(+); these read GTT and ATNM. His143 serves as the catalytic Proton donor/acceptor. His144 provides a ligand contact to (S)-2,3,4,5-tetrahydrodipicolinate. Lys147 (proton donor) is an active-site residue. 153 to 154 is a (S)-2,3,4,5-tetrahydrodipicolinate binding site; the sequence is GT.

Belongs to the DapB family.

Its subcellular location is the cytoplasm. The catalysed reaction is (S)-2,3,4,5-tetrahydrodipicolinate + NAD(+) + H2O = (2S,4S)-4-hydroxy-2,3,4,5-tetrahydrodipicolinate + NADH + H(+). It carries out the reaction (S)-2,3,4,5-tetrahydrodipicolinate + NADP(+) + H2O = (2S,4S)-4-hydroxy-2,3,4,5-tetrahydrodipicolinate + NADPH + H(+). Its pathway is amino-acid biosynthesis; L-lysine biosynthesis via DAP pathway; (S)-tetrahydrodipicolinate from L-aspartate: step 4/4. In terms of biological role, catalyzes the conversion of 4-hydroxy-tetrahydrodipicolinate (HTPA) to tetrahydrodipicolinate. The protein is 4-hydroxy-tetrahydrodipicolinate reductase of Campylobacter concisus (strain 13826).